The sequence spans 133 residues: UPF0344 protein SH1980 (133 aa).

A run of 4 helical transmembrane segments spans residues 1–21, 42–62, 71–91, and 103–123; these read MLHM…IAFL, VFML…FMAA, MLLT…EVSI, and LFWA…ILPW.

It belongs to the UPF0344 family.

The protein localises to the cell membrane. The sequence is that of UPF0344 protein SH1980 from Staphylococcus haemolyticus (strain JCSC1435).